The sequence spans 310 residues: ADP-L-glycero-D-manno-heptose-6-epimerase (310 aa).

Residues 10–11 (FI), 31–32 (DN), Lys38, Lys53, 75–79 (EGACS), and Asn92 contribute to the NADP(+) site. Tyr140 acts as the Proton acceptor in catalysis. Lys144 contacts NADP(+). A substrate-binding site is contributed by Asn169. Residues Val170 and Lys178 each contribute to the NADP(+) site. The active-site Proton acceptor is Lys178. Residues Ser180, His187, 201–204 (FEGS), Arg209, and Tyr272 contribute to the substrate site.

This sequence belongs to the NAD(P)-dependent epimerase/dehydratase family. HldD subfamily. Homopentamer. NADP(+) serves as cofactor.

The catalysed reaction is ADP-D-glycero-beta-D-manno-heptose = ADP-L-glycero-beta-D-manno-heptose. Its pathway is nucleotide-sugar biosynthesis; ADP-L-glycero-beta-D-manno-heptose biosynthesis; ADP-L-glycero-beta-D-manno-heptose from D-glycero-beta-D-manno-heptose 7-phosphate: step 4/4. Catalyzes the interconversion between ADP-D-glycero-beta-D-manno-heptose and ADP-L-glycero-beta-D-manno-heptose via an epimerization at carbon 6 of the heptose. The polypeptide is ADP-L-glycero-D-manno-heptose-6-epimerase (Cronobacter sakazakii (strain ATCC BAA-894) (Enterobacter sakazakii)).